A 309-amino-acid polypeptide reads, in one-letter code: Porphobilinogen deaminase (309 aa).

Cys-242 carries the S-(dipyrrolylmethanemethyl)cysteine modification.

Belongs to the HMBS family. Monomer. Requires dipyrromethane as cofactor.

The enzyme catalyses 4 porphobilinogen + H2O = hydroxymethylbilane + 4 NH4(+). The protein operates within porphyrin-containing compound metabolism; protoporphyrin-IX biosynthesis; coproporphyrinogen-III from 5-aminolevulinate: step 2/4. Its function is as follows. Tetrapolymerization of the monopyrrole PBG into the hydroxymethylbilane pre-uroporphyrinogen in several discrete steps. The protein is Porphobilinogen deaminase of Hamiltonella defensa subsp. Acyrthosiphon pisum (strain 5AT).